Reading from the N-terminus, the 154-residue chain is 3-hydroxyacyl-[acyl-carrier-protein] dehydratase FabZ (154 aa).

Residue His54 is part of the active site.

Belongs to the thioester dehydratase family. FabZ subfamily.

It is found in the cytoplasm. It catalyses the reaction a (3R)-hydroxyacyl-[ACP] = a (2E)-enoyl-[ACP] + H2O. Involved in unsaturated fatty acids biosynthesis. Catalyzes the dehydration of short chain beta-hydroxyacyl-ACPs and long chain saturated and unsaturated beta-hydroxyacyl-ACPs. The sequence is that of 3-hydroxyacyl-[acyl-carrier-protein] dehydratase FabZ from Shewanella baltica (strain OS223).